Reading from the N-terminus, the 95-residue chain is Basic phospholipase A2 (95 aa).

Residues lysine 7 and lysine 10 are each lipidated (N6-palmitoyl lysine). Ca(2+) is bound by residues tyrosine 23, glycine 25, and glycine 27. 5 disulfide bridges follow: cysteine 24–cysteine 40, cysteine 39–cysteine 77, cysteine 46–cysteine 70, cysteine 53–cysteine 63, and cysteine 57–cysteine 68. Histidine 43 is an active-site residue. Ca(2+) is bound at residue aspartate 44. Residue aspartate 71 is part of the active site.

As to quaternary structure, monomer. Ca(2+) is required as a cofactor. In terms of tissue distribution, expressed by the venom gland.

The protein localises to the secreted. It catalyses the reaction a 1,2-diacyl-sn-glycero-3-phosphocholine + H2O = a 1-acyl-sn-glycero-3-phosphocholine + a fatty acid + H(+). PLA2 catalyzes the calcium-dependent hydrolysis of the 2-acyl groups in 3-sn-phosphoglycerides. Induces local and systemic myotoxicity in an intramuscular mouse model. Induces local edema in a mouse footpad assay. Does not exhibit any anticoagulant effects. Does not mediate an antibacterial effect against Gram-negative and Gram-positive bacteria. The chain is Basic phospholipase A2 from Agkistrodon piscivorus leucostoma (Western cottonmouth).